A 385-amino-acid polypeptide reads, in one-letter code: tRNA 2-selenouridine synthase (385 aa).

Residues 15-138 (FIADTPLIDV…ARQFLISTID (124 aa)) form the Rhodanese domain. Residue Cys98 is the S-selanylcysteine intermediate of the active site.

The protein belongs to the SelU family. Monomer.

The catalysed reaction is 5-methylaminomethyl-2-thiouridine(34) in tRNA + selenophosphate + (2E)-geranyl diphosphate + H2O + H(+) = 5-methylaminomethyl-2-selenouridine(34) in tRNA + (2E)-thiogeraniol + phosphate + diphosphate. It carries out the reaction 5-methylaminomethyl-2-thiouridine(34) in tRNA + (2E)-geranyl diphosphate = 5-methylaminomethyl-S-(2E)-geranyl-thiouridine(34) in tRNA + diphosphate. The enzyme catalyses 5-methylaminomethyl-S-(2E)-geranyl-thiouridine(34) in tRNA + selenophosphate + H(+) = 5-methylaminomethyl-2-(Se-phospho)selenouridine(34) in tRNA + (2E)-thiogeraniol. It catalyses the reaction 5-methylaminomethyl-2-(Se-phospho)selenouridine(34) in tRNA + H2O = 5-methylaminomethyl-2-selenouridine(34) in tRNA + phosphate. Involved in the post-transcriptional modification of the uridine at the wobble position (U34) of tRNA(Lys), tRNA(Glu) and tRNA(Gln). Catalyzes the conversion of 2-thiouridine (S2U-RNA) to 2-selenouridine (Se2U-RNA). Acts in a two-step process involving geranylation of 2-thiouridine (S2U) to S-geranyl-2-thiouridine (geS2U) and subsequent selenation of the latter derivative to 2-selenouridine (Se2U) in the tRNA chain. This Nitrosomonas europaea (strain ATCC 19718 / CIP 103999 / KCTC 2705 / NBRC 14298) protein is tRNA 2-selenouridine synthase.